The following is a 624-amino-acid chain: Diatom spindle kinesin-1 (624 aa).

Positions 1 to 59 are disordered; the sequence is MNAANRRKSTSTVGITGRKDATRMKIEQMEKERKERRKTMMQRKEARKQEHMKNIEAGN. The interval 1-85 is globular; it reads MNAANRRKST…QENKIGDKSP (85 aa). 2 stretches are compositionally biased toward basic and acidic residues: residues 17–33 and 42–54; these read GRKD…EKER and QRKE…HMKN. The 317-residue stretch at 95–411 folds into the Kinesin motor domain; it reads NICIAVRKRP…LRYADRIKEQ (317 aa). 186-193 is an ATP binding site; sequence GQTGSGKT. Residues 426-624 are a coiled coil; that stretch reads SNREIMPSKE…LARQVQLTQY (199 aa). Acidic residues predominate over residues 478–511; that stretch reads VDEEEADDEEGDYEEESEDLDYEDSEGQDYEEAV. Residues 478–528 are disordered; that stretch reads VDEEEADDEEGDYEEESEDLDYEDSEGQDYEEAVESQYDHSQEAQEGEEEL.

It belongs to the TRAFAC class myosin-kinesin ATPase superfamily. Kinesin family. MCAK/KIF2 subfamily.

The protein localises to the cytoplasm. It localises to the cytoskeleton. Its function is as follows. Involved in anaphase spindle elongation. In Cylindrotheca fusiformis (Marine diatom), this protein is Diatom spindle kinesin-1 (DSK1).